Consider the following 485-residue polypeptide: Silicon efflux transporter LSI3 (485 aa).

A run of 5 helical transmembrane segments spans residues 14 to 34, 37 to 57, 59 to 79, 106 to 126, and 180 to 200; these read VAFGVFWMLAVFPSVPFLPIG, AGALLGAVLMIVFHVISADDA, ASIDLPILGLLFATMVVGGYL, VCVVTALASALFTNDTCCVVL, and FLLGILPAMLAGMGINMLMLL. The span at 233 to 242 shows a compositional bias: basic and acidic residues; the sequence is ALNNNKKDDG. The interval 233–261 is disordered; that stretch reads ALNNNKKDDGDAATPASPEDDDGGDAESM. 5 helical membrane-spanning segments follow: residues 283-303, 336-356, 377-397, 418-438, and 461-481; these read LFLKSFAYVVTVGMLVAYMLG, LLVFFSGMFVTVSGFNKTGLP, VLSVIILLLSNLASNVPTVLL, WLLLAWVSTVAGNLSLLGSAA, and HVIFGLPSTLVVTAIGIPLIG.

It belongs to the arsenite-antimonite (ArsB) efflux (TC 2.A.45) family.

The protein localises to the cell membrane. In terms of biological role, silicon efflux transporter involved in silicon transport in shoots. In the nodes, involved with LSI2 and NIP2-2/LSI6 in silicon intervascular transfer, which is required for the preferential distribution of silicon, such as hyperaccumulation of silicon in the husk. Silicon is beneficial to plant growth and helps plants to overcome abiotic and biotic stresses by preventing lodging (falling over) and increasing resistance to pests and diseases, as well as other stresses. The polypeptide is Silicon efflux transporter LSI3 (Oryza sativa subsp. japonica (Rice)).